Consider the following 204-residue polypeptide: Elongation factor Ts (204 aa).

The interval 80–83 (TDFV) is involved in Mg(2+) ion dislocation from EF-Tu.

This sequence belongs to the EF-Ts family.

It is found in the cytoplasm. Its function is as follows. Associates with the EF-Tu.GDP complex and induces the exchange of GDP to GTP. It remains bound to the aminoacyl-tRNA.EF-Tu.GTP complex up to the GTP hydrolysis stage on the ribosome. This is Elongation factor Ts from Thermoanaerobacter sp. (strain X514).